The following is a 562-amino-acid chain: Probable malate:quinone oxidoreductase (562 aa).

It belongs to the MQO family. FAD serves as cofactor.

The catalysed reaction is (S)-malate + a quinone = a quinol + oxaloacetate. It functions in the pathway carbohydrate metabolism; tricarboxylic acid cycle; oxaloacetate from (S)-malate (quinone route): step 1/1. This chain is Probable malate:quinone oxidoreductase, found in Stenotrophomonas maltophilia (strain K279a).